Consider the following 425-residue polypeptide: Enolase (425 aa).

A (2R)-2-phosphoglycerate-binding site is contributed by Gln-163. The active-site Proton donor is Glu-205. 3 residues coordinate Mg(2+): Asp-242, Glu-286, and Asp-313. The (2R)-2-phosphoglycerate site is built by Lys-338, Arg-367, Ser-368, and Lys-389. Lys-338 acts as the Proton acceptor in catalysis.

This sequence belongs to the enolase family. Mg(2+) is required as a cofactor.

Its subcellular location is the cytoplasm. The protein resides in the secreted. It is found in the cell surface. It catalyses the reaction (2R)-2-phosphoglycerate = phosphoenolpyruvate + H2O. It participates in carbohydrate degradation; glycolysis; pyruvate from D-glyceraldehyde 3-phosphate: step 4/5. In terms of biological role, catalyzes the reversible conversion of 2-phosphoglycerate (2-PG) into phosphoenolpyruvate (PEP). It is essential for the degradation of carbohydrates via glycolysis. The protein is Enolase of Lactobacillus delbrueckii subsp. bulgaricus (strain ATCC 11842 / DSM 20081 / BCRC 10696 / JCM 1002 / NBRC 13953 / NCIMB 11778 / NCTC 12712 / WDCM 00102 / Lb 14).